The following is a 301-amino-acid chain: Probable alpha-L-glutamate ligase (301 aa).

The ATP-grasp domain occupies 104–287 (MQLLSRKGIG…VAGLIIDFIE (184 aa)). ATP-binding positions include K141, 178 to 179 (EF), D187, and 211 to 213 (RSN). The Mg(2+) site is built by D248, E260, and N262. Mn(2+)-binding residues include D248, E260, and N262.

The protein belongs to the RimK family. Mg(2+) is required as a cofactor. Mn(2+) serves as cofactor.

This Aliivibrio fischeri (strain MJ11) (Vibrio fischeri) protein is Probable alpha-L-glutamate ligase.